The primary structure comprises 62 residues: Large ribosomal subunit protein bL28 (62 aa).

The segment at 1–22 is disordered; that stretch reads MAKKCAISGKGPMSGNNVSHAK.

This sequence belongs to the bacterial ribosomal protein bL28 family.

This is Large ribosomal subunit protein bL28 from Sulfurimonas denitrificans (strain ATCC 33889 / DSM 1251) (Thiomicrospira denitrificans (strain ATCC 33889 / DSM 1251)).